A 451-amino-acid polypeptide reads, in one-letter code: Phosphoglucosamine mutase (451 aa).

The active-site Phosphoserine intermediate is Ser-101. Residues Ser-101, Asp-240, Asp-242, and Asp-244 each coordinate Mg(2+). Ser-101 carries the post-translational modification Phosphoserine.

The protein belongs to the phosphohexose mutase family. It depends on Mg(2+) as a cofactor. Post-translationally, activated by phosphorylation.

It catalyses the reaction alpha-D-glucosamine 1-phosphate = D-glucosamine 6-phosphate. In terms of biological role, catalyzes the conversion of glucosamine-6-phosphate to glucosamine-1-phosphate. In Streptococcus pyogenes serotype M1, this protein is Phosphoglucosamine mutase.